The primary structure comprises 199 residues: Peptidyl-tRNA hydrolase (199 aa).

Tyrosine 15 serves as a coordination point for tRNA. The active-site Proton acceptor is histidine 20. Residues phenylalanine 66, asparagine 68, and asparagine 114 each contribute to the tRNA site.

This sequence belongs to the PTH family. As to quaternary structure, monomer.

The protein localises to the cytoplasm. It carries out the reaction an N-acyl-L-alpha-aminoacyl-tRNA + H2O = an N-acyl-L-amino acid + a tRNA + H(+). Its function is as follows. Hydrolyzes ribosome-free peptidyl-tRNAs (with 1 or more amino acids incorporated), which drop off the ribosome during protein synthesis, or as a result of ribosome stalling. In terms of biological role, catalyzes the release of premature peptidyl moieties from peptidyl-tRNA molecules trapped in stalled 50S ribosomal subunits, and thus maintains levels of free tRNAs and 50S ribosomes. The sequence is that of Peptidyl-tRNA hydrolase from Cupriavidus pinatubonensis (strain JMP 134 / LMG 1197) (Cupriavidus necator (strain JMP 134)).